The following is a 453-amino-acid chain: Lipase 9 (453 aa).

An N-terminal signal peptide occupies residues M1–A14. The N-linked (GlcNAc...) asparagine glycan is linked to N36. C110 and C281 form a disulfide bridge. S194 (charge relay system) is an active-site residue. N-linked (GlcNAc...) asparagine glycosylation is found at N229, N266, and N269. Active-site charge relay system residues include D343 and H376. Residues C359 and C404 are joined by a disulfide bond. A glycan (N-linked (GlcNAc...) asparagine) is linked at N417.

Belongs to the AB hydrolase superfamily. Lipase family. Class Lip subfamily.

The protein resides in the secreted. It catalyses the reaction a triacylglycerol + H2O = a diacylglycerol + a fatty acid + H(+). Secreted lipase that is able to hydrolyze both the neutral triacylglycerols and the monopalmitate ester Tween 40, allowing the use of hydrolyzed products as carbon sources. Has broad lipolytic activity, which may be important for colonization and subsequent infection, therefore contributing to the persistence and virulence in human tissue. The sequence is that of Lipase 9 from Candida albicans (strain SC5314 / ATCC MYA-2876) (Yeast).